The primary structure comprises 336 residues: 3-isopropylmalate dehydrogenase (336 aa).

The substrate site is built by arginine 87, arginine 97, arginine 121, and aspartate 211. Mg(2+) contacts are provided by aspartate 211, aspartate 235, and aspartate 239. An NAD(+)-binding site is contributed by 271 to 283 (GSAPDIAGQGIAD).

Belongs to the isocitrate and isopropylmalate dehydrogenases family. LeuB type 2 subfamily. Homodimer. It depends on Mg(2+) as a cofactor. Mn(2+) serves as cofactor.

It localises to the cytoplasm. It carries out the reaction (2R,3S)-3-isopropylmalate + NAD(+) = 4-methyl-2-oxopentanoate + CO2 + NADH. Its pathway is amino-acid biosynthesis; L-leucine biosynthesis; L-leucine from 3-methyl-2-oxobutanoate: step 3/4. In terms of biological role, catalyzes the oxidation of 3-carboxy-2-hydroxy-4-methylpentanoate (3-isopropylmalate) to 3-carboxy-4-methyl-2-oxopentanoate. The product decarboxylates to 4-methyl-2 oxopentanoate. This is 3-isopropylmalate dehydrogenase from Mycobacterium sp. (strain JLS).